Here is a 383-residue protein sequence, read N- to C-terminus: Embryonic pepsinogen (383 aa).

The signal sequence occupies residues 1–16 (MRSLALLCAVLALSDG). In terms of domain architecture, Peptidase A1 spans 76-380 (YYGTISIGTP…DRANNRVGLA (305 aa)). Residue aspartate 94 is part of the active site. Cysteine 107 and cysteine 112 are oxidised to a cystine. Asparagine 132 and asparagine 204 each carry an N-linked (GlcNAc...) asparagine glycan. An intrachain disulfide couples cysteine 267 to cysteine 271. Aspartate 276 is an active-site residue. Residue asparagine 309 is glycosylated (N-linked (GlcNAc...) asparagine). Residues cysteine 310 and cysteine 344 are joined by a disulfide bond. An N-linked (GlcNAc...) asparagine glycan is attached at asparagine 350.

It belongs to the peptidase A1 family.

The protein is Embryonic pepsinogen of Gallus gallus (Chicken).